A 230-amino-acid polypeptide reads, in one-letter code: Claudin-2 (230 aa).

Residues 1–7 lie on the Cytoplasmic side of the membrane; that stretch reads MASLGVQ. Residues 8 to 28 traverse the membrane as a helical segment; the sequence is LVGYILGLLGLLGTSIAMLLP. Topologically, residues 29 to 81 are extracellular; sequence NWRTSSYVGASIVTAVGFSKGLWMECATHSTGITQCDIYSTLLGLPADIQAAQ. An intrachain disulfide couples C54 to C64. The chain crosses the membrane as a helical span at residues 82–102; that stretch reads AMMVTSSAMSSLACIISVVGM. The Cytoplasmic portion of the chain corresponds to 103-116; it reads RCTVFCQDSRAKDR. The helical transmembrane segment at 117–137 threads the bilayer; it reads VAVVGGVFFILGGILGFIPVA. Topologically, residues 138–162 are extracellular; sequence WNLHGILRDFYSPLVPDSMKFEIGE. The chain crosses the membrane as a helical span at residues 163 to 183; sequence ALYLGIISALFSLVAGVILCF. Residues 184 to 230 are Cytoplasmic-facing; it reads SCSPQGNRTNYYDGYQAQPLATRSSPRSAQQPKAKSEFNSYSLTGYV. A disordered region spans residues 205 to 230; that stretch reads TRSSPRSAQQPKAKSEFNSYSLTGYV. K218 participates in a covalent cross-link: Glycyl lysine isopeptide (Lys-Gly) (interchain with G-Cter in SUMO). Residues S219 and S223 each carry the phosphoserine modification. The segment at 229 to 230 is interactions with TJP1, TJP2 and TJP3; sequence YV.

It belongs to the claudin family. In terms of assembly, can form homo- and heteropolymers with other claudins to mediate paracellular barrier and channel functions of tight junctions in response to physiological stimuli. Homopolymers interact with CLDN3, but not CLDN1, homopolymers. Directly interacts with TJP1/ZO-1, TJP2/ZO-2 and TJP3/ZO-3. In terms of processing, the disulfide bond is necessary for pore formation, but is not required for correct protein trafficking. As to expression, expressed in the kidney, liver and intestine, with higher levels in the ileum than in the jejunum. Low levels in the brain. Expressed in colonic epithelium (at protein level). Expressed in the perivenous regions, bile ducts, and gallbladder epithelium (at protein level).

It is found in the cell junction. The protein localises to the tight junction. It localises to the cell membrane. The catalysed reaction is Na(+)(in) = Na(+)(out). It catalyses the reaction K(+)(in) = K(+)(out). The enzyme catalyses Rb(+)(in) = Rb(+)(out). It carries out the reaction Li(+)(in) = Li(+)(out). The catalysed reaction is Cs(+)(in) = Cs(+)(out). It catalyses the reaction Ca(2+)(in) = Ca(2+)(out). The enzyme catalyses methylamine(out) = methylamine(in). It carries out the reaction choline(out) = choline(in). The catalysed reaction is H2O(in) = H2O(out). The channel permeability is down-regulated at acidic pH. Its function is as follows. Forms paracellular channels: polymerizes in tight junction strands with cation- and water-selective channels through the strands, conveying epithelial permeability in a process known as paracellular tight junction permeability. In intestinal epithelium, allows for sodium and water fluxes from the peritoneal side to the lumen of the intestine to regulate nutrient absorption and clear enteric pathogens as part of mucosal immune response. In kidney, allows passive sodium and calcium reabsorption across proximal tubules from the lumen back to the bloodstream. In the hepatobiliary tract, allows paracellular water and cation fluxes in the hepatic perivenous areas and biliary epithelium to generate bile flow and maintain osmotic gradients. In Mus musculus (Mouse), this protein is Claudin-2.